The primary structure comprises 72 residues: UPF0729 protein C18orf32 homolog (72 aa).

Residues 1-33 are necessary for its localzation to the endoplasmic reticulum and lipid droplets; that stretch reads MVCIPCIVIPVLLWIFKKFLEPYIYPVVSRIWP. Positions 45-72 are disordered; it reads TGKVDCKGADTNGFSTKGPTEVSDKKKD.

It belongs to the UPF0729 family. As to quaternary structure, interacts with DERL1 and AMFR. Undergoes ER-associated degradation (ERAD).

It is found in the endoplasmic reticulum. The protein localises to the lipid droplet. May activate the NF-kappa-B signaling pathway. The chain is UPF0729 protein C18orf32 homolog from Rattus norvegicus (Rat).